The chain runs to 480 residues: Type VI lipase adapter protein Tla3 (480 aa).

The disordered stretch occupies residues 410–458; it reads ISSPTPGKKPVHDPFGVDLLPQTASGDGPPPSADPVAPASRLTTRLPPG.

As to quaternary structure, interacts with the Tle3 toxin on one side and with the H2-T6SS component VgrG2b on the other side.

Its subcellular location is the cytoplasm. Adapter protein that targets and loads the Tle3 toxin onto the H2 type VI secretion system (H2-T6SS) machinery through an interaction with the TTR domain of VgrG2b. Seems specific for Tle3. This chain is Type VI lipase adapter protein Tla3, found in Pseudomonas aeruginosa (strain ATCC 15692 / DSM 22644 / CIP 104116 / JCM 14847 / LMG 12228 / 1C / PRS 101 / PAO1).